Here is a 101-residue protein sequence, read N- to C-terminus: Feather keratin Cos1-1/Cos1-3/Cos2-1 (101 aa).

Residue Ser-2 is modified to N-acetylserine.

The protein belongs to the avian keratin family. In terms of assembly, the avian keratins (F-ker, S-ker, C-ker and B-ker) are a complex mixture of very similar polypeptides.

The polypeptide is Feather keratin Cos1-1/Cos1-3/Cos2-1 (Columba livia (Rock dove)).